We begin with the raw amino-acid sequence, 300 residues long: Nucleotide-binding protein Daci_5422 (300 aa).

Position 10–17 (10–17 (GMSGSGKS)) interacts with ATP. 59 to 62 (DARS) contacts GTP.

It belongs to the RapZ-like family.

Displays ATPase and GTPase activities. This chain is Nucleotide-binding protein Daci_5422, found in Delftia acidovorans (strain DSM 14801 / SPH-1).